We begin with the raw amino-acid sequence, 384 residues long: Glucans biosynthesis protein C (384 aa).

Transmembrane regions (helical) follow at residues 17–37 (AWLM…THSW), 54–74 (FIHA…SYML), 91–111 (VGIP…ILLQ), 140–160 (LWFL…FTWF), 173–193 (AISL…YAAI), 212–232 (FIVM…LAFI), 240–260 (FTTP…AYLL), 274–294 (TESV…FSLG), 311–331 (ASLF…AYIT), and 338–358 (LIGF…LYEI).

The protein belongs to the acyltransferase 3 family. OpgC subfamily.

It localises to the cell membrane. It participates in glycan metabolism; osmoregulated periplasmic glucan (OPG) biosynthesis. Necessary for the succinyl substitution of periplasmic glucans. Could catalyze the transfer of succinyl residues from the cytoplasmic side of the membrane to the nascent glucan backbones on the periplasmic side of the membrane. The protein is Glucans biosynthesis protein C of Salmonella heidelberg (strain SL476).